The following is a 951-amino-acid chain: MPGPLGLLCFLALGLRGSAEPSGAAPPLCAAPCSCDGDRRVDCSGKGLTAVPEGLSAFTQLLDISMNNITQLPEDAFKNFPFLEELRLAGNDLSFIHPKALSGLKELKVLTLQNNQLKTVPSEAIRGLSSLQSLRLDANHITSVPEDSFEGLTQLRHLWLDDNSLTEVPVHPLSNLPTLQALTLALNKISSIPDFAFTNLSSLVVLHLHNNKIKSLGQHCFDGLDNLETLDLNYNNLGEFPQAIKALPSLKELLFHSNSISVIPDGAFDGNPLLKTIHLYDNPLSFVGNSAFHNLSELHSLVIRGASMVQRFPNLTGTVRLESLTLTGTKISSISNNLCQEQKRLRTLDLSYNSIKDLPSFNGCHALEEISLQRNQIHQIKEDTFQGLTSLKILDLSRNLIHEIDDRAFAKLGSITNLDVSFNELTSFPTEGLNGLNQLKLVGNFKLKEALAAKDFVNLRSLSVPYAYQCCAFWGCDSYTHSNTEDNSLQDHSGSKDKGLSDVAGVTSSAENEEHSQIIIHCTPSTGAFKPCEYLLGSWMIRLTVWFIFLVALFFNLLVILTTFASCTSVPSSKLFIGLISVSNLFMGAYTGILTFLDAVSWGRFAEFGIWWEIGSGCKIAGFLAVFSSESAIFLLMLAAVERSLSAKDMMKNGKSNHLRQFRIAALLAFLGAAVAGSFPLFHRGEYSASPLCLPFPTGETPSLGFTVTLVLLNSLAFLLMAIIYTKLYCNLEKEDLSESSQSSMIKHVAWLIFTNCIFFCPVAFFSFAPLITAVSISPEIMKSVTLIFFPLPACLNPVLYVFFNPKFKEDWKLLKRHVSKKSGSASVSISSQAGCVEQDFYYDCGMYSHLQGNLTVCDCCEAFLLTKPVSCKHLIKSHSCPALTVGSCQRPDGYWSDCGTQSAHSDYADEEDSFVSDSSDQVQACGRACFYQSRGFPLVRYAYNLPRVKD.

Positions 1–19 are cleaved as a signal peptide; sequence MPGPLGLLCFLALGLRGSA. Topologically, residues 20-544 are extracellular; that stretch reads EPSGAAPPLC…LLGSWMIRLT (525 aa). The region spanning 25 to 57 is the LRRNT domain; it reads APPLCAAPCSCDGDRRVDCSGKGLTAVPEGLSA. Intrachain disulfides connect cysteine 29-cysteine 35 and cysteine 33-cysteine 43. LRR repeat units lie at residues 35-58, 59-79, 81-103, 104-127, 128-151, 153-175, 176-199, 201-223, 224-247, 248-270, and 272-294; these read CDGD…LSAF, TQLL…AFKN, PFLE…ALSG, LKEL…AIRG, LSSL…SFEG, TQLR…PLSN, LPTL…AFTN, SSLV…CFDG, LDNL…IKAL, PSLK…AFDG, and PLLK…AFHN. A glycan (N-linked (GlcNAc...) asparagine) is linked at asparagine 68. An N-linked (GlcNAc...) asparagine glycan is attached at asparagine 199. Asparagine 294 and asparagine 314 each carry an N-linked (GlcNAc...) asparagine glycan. LRR repeat units lie at residues 318–341, 342–363, 364–387, 388–411, and 413–435; these read TVRL…LCQE, QKRL…SFNG, CHAL…TFQG, LTSL…AFAK, and GSIT…GLNG. The cysteines at positions 339 and 364 are disulfide-linked. 2 cysteine pairs are disulfide-bonded: cysteine 470–cysteine 522 and cysteine 471–cysteine 476. Residues 545 to 565 traverse the membrane as a helical segment; that stretch reads VWFIFLVALFFNLLVILTTFA. Topologically, residues 566 to 575 are cytoplasmic; the sequence is SCTSVPSSKL. Residues 576–596 form a helical membrane-spanning segment; sequence FIGLISVSNLFMGAYTGILTF. Over 597–619 the chain is Extracellular; that stretch reads LDAVSWGRFAEFGIWWEIGSGCK. The cysteines at positions 618 and 693 are disulfide-linked. A helical membrane pass occupies residues 620-640; that stretch reads IAGFLAVFSSESAIFLLMLAA. At 641–661 the chain is on the cytoplasmic side; that stretch reads VERSLSAKDMMKNGKSNHLRQ. Residues 662–682 traverse the membrane as a helical segment; that stretch reads FRIAALLAFLGAAVAGSFPLF. Topologically, residues 683-703 are extracellular; that stretch reads HRGEYSASPLCLPFPTGETPS. The helical transmembrane segment at 704–724 threads the bilayer; it reads LGFTVTLVLLNSLAFLLMAII. Over 725–756 the chain is Cytoplasmic; the sequence is YTKLYCNLEKEDLSESSQSSMIKHVAWLIFTN. A helical transmembrane segment spans residues 757 to 777; it reads CIFFCPVAFFSFAPLITAVSI. The Extracellular portion of the chain corresponds to 778–783; that stretch reads SPEIMK. A helical membrane pass occupies residues 784-804; the sequence is SVTLIFFPLPACLNPVLYVFF. The Cytoplasmic portion of the chain corresponds to 805-951; the sequence is NPKFKEDWKL…YAYNLPRVKD (147 aa). Position 920 is a phosphoserine (serine 920).

It belongs to the G-protein coupled receptor 1 family.

It localises to the cell membrane. In terms of biological role, receptor for R-spondins that potentiates the canonical Wnt signaling pathway and is involved in the formation of various organs. Upon binding to R-spondins (RSPO1, RSPO2, RSPO3 or RSPO4), associates with phosphorylated LRP6 and frizzled receptors that are activated by extracellular Wnt receptors, triggering the canonical Wnt signaling pathway to increase expression of target genes. In contrast to classical G-protein coupled receptors, does not activate heterotrimeric G-proteins to transduce the signal. Its function as activator of the Wnt signaling pathway is required for the development of various organs, including liver, kidney, intestine, bone, reproductive tract and eye. May also act as a receptor for norrin (NDP), such results however required additional confirmation in vivo. Required during spermatogenesis to activate the Wnt signaling pathway in peritubular myoid cells. Required for the maintenance of intestinal stem cells and Paneth cell differentiation in postnatal intestinal crypts. Acts as a regulator of bone formation and remodeling. Involved in kidney development; required for maintaining the ureteric bud in an undifferentiated state. Involved in the development of the anterior segment of the eye. Required during erythropoiesis. Also acts as a negative regulator of innate immunity by inhibiting TLR2/TLR4 associated pattern-recognition and pro-inflammatory cytokine production. Plays an important role in regulating the circadian rhythms of plasma lipids, partially through regulating the rhythmic expression of MTTP. Required for proper development of GnRH neurons (gonadotropin-releasing hormone expressing neurons) that control the release of reproductive hormones from the pituitary gland. In Bos taurus (Bovine), this protein is Leucine-rich repeat-containing G-protein coupled receptor 4 (LGR4).